We begin with the raw amino-acid sequence, 398 residues long: MGMPFIKHVRAFTVRGGGADYHDQGGGHWIDDHIATPMSKYPEYRQSRQSFGINVLGTLVVEIEASDGTVGFSVTTGGDLGCFIVEKHLARFLEGARVTDIEKMWDQMYSATLYYGRKGIVINTISGVDLALWDLLAKIRKEPVHALLGGPVRDELIFYATGARPDLARQMGFIGGKMPLHHAPAEREEGLAKNLDMIGDMRSKVGKDFWLMLDCWMSLDVEYATRLATAARNEHGLKWIEEALSPDDYWGYAELRRNVPRGMLVTTGEHEATRWGFRLLLEMGCCDIIQPDVGWCGGITELIKISNLADAHGKLVVPHGSSVYSYHFVITRQNSPFAEFLMMAPKADEVVPMFNPQLLDEPVPVNGRIKASALDAPGFGVRLNPDIALHRPYPRQAA.

2 residues coordinate substrate: His-22 and Arg-48. Positions 214, 241, and 269 each coordinate Mg(2+). His-319 serves as the catalytic Proton acceptor. Glu-339 serves as a coordination point for substrate.

The protein belongs to the mandelate racemase/muconate lactonizing enzyme family. RhamD subfamily. Homooctamer; tetramer of dimers. Requires Mg(2+) as cofactor.

The enzyme catalyses L-rhamnonate = 2-dehydro-3-deoxy-L-rhamnonate + H2O. Its function is as follows. Catalyzes the dehydration of L-rhamnonate to 2-keto-3-deoxy-L-rhamnonate (KDR). The chain is L-rhamnonate dehydratase from Verminephrobacter eiseniae (strain EF01-2).